Consider the following 141-residue polypeptide: MQRKHKRILFVAVSFIALGCVSAFVLFELSKSISFFCTPTELVADPIKSSRYPIRVGGMIVKGSIVRHGDSVTFSITDLGTELEVTYRGVLPPMFGEDVGAIAKGRFVDGVFIAEELLAKHDEKYMPKKYSSSDAAVIGSS.

Over 1 to 7 (MQRKHKR) the chain is Cytoplasmic. Residues 8-28 (ILFVAVSFIALGCVSAFVLFE) traverse the membrane as a helical; Signal-anchor for type II membrane protein segment. The Periplasmic portion of the chain corresponds to 29 to 141 (LSKSISFFCT…SSDAAVIGSS (113 aa)). Residues histidine 121 and tyrosine 125 each contribute to the heme site.

This sequence belongs to the CcmE/CycJ family.

Its subcellular location is the cell inner membrane. In terms of biological role, heme chaperone required for the biogenesis of c-type cytochromes. Transiently binds heme delivered by CcmC and transfers the heme to apo-cytochromes in a process facilitated by CcmF and CcmH. This chain is Cytochrome c-type biogenesis protein CcmE, found in Anaplasma phagocytophilum (strain HZ).